The following is a 208-amino-acid chain: Sodium/potassium-transporting ATPase subunit beta-1-interacting protein 4 (208 aa).

The next 3 helical transmembrane spans lie at 35 to 55, 62 to 82, and 151 to 171; these read APILANFVHIIIVILGLFGTI, VMVYTLWAAVWVTWNVFIICF, and CLQILIALLGFVCGCQVVSVF.

Belongs to the NKAIN family. In terms of assembly, interacts with ATP1B1.

The protein localises to the cell membrane. In Homo sapiens (Human), this protein is Sodium/potassium-transporting ATPase subunit beta-1-interacting protein 4 (NKAIN4).